Reading from the N-terminus, the 87-residue chain is MSERNQRKVYVGRVVSDKMDKTITVLVETYKKHPLYGKRVKYSKKYKAHDEHNEAKVGDIVKIMETRPLSATKRFRLVEIVEKAVVL.

The protein belongs to the universal ribosomal protein uS17 family. In terms of assembly, part of the 30S ribosomal subunit.

One of the primary rRNA binding proteins, it binds specifically to the 5'-end of 16S ribosomal RNA. The polypeptide is Small ribosomal subunit protein uS17 (Geobacillus stearothermophilus (Bacillus stearothermophilus)).